We begin with the raw amino-acid sequence, 323 residues long: Viral cathepsin (323 aa).

The N-terminal stretch at 1–16 (MNKILFYLFVYGVVNS) is a signal peptide. A propeptide spans 17-112 (AAYDLLKAPN…IVLDQPPGKG (96 aa)) (activation peptide). 3 cysteine pairs are disulfide-bonded: Cys-133/Cys-174, Cys-167/Cys-207, and Cys-262/Cys-310. Cys-136 is an active-site residue. An N-linked (GlcNAc...) asparagine; by host glycan is attached at Asn-158. Active-site residues include His-269 and Asn-289.

Belongs to the peptidase C1 family. Synthesized as an inactive proenzyme and activated by proteolytic removal of the inhibitory propeptide.

It catalyses the reaction Endopeptidase of broad specificity, hydrolyzing substrates of both cathepsin L and cathepsin B.. Functionally, cysteine protease that plays an essential role in host liquefaction to facilitate horizontal transmission of the virus. May participate in the degradation of foreign protein expressed by the baculovirus system. This chain is Viral cathepsin (VCATH), found in Helicoverpa zea (Corn earworm moth).